Here is a 949-residue protein sequence, read N- to C-terminus: Insulin receptor substrate 1 (949 aa).

The 102-residue stretch at 8-109 (GMALSGYLKK…WLDKLLVLQR (102 aa)) folds into the PH domain. The 115-residue stretch at 122-236 (YDQVWQVVIQ…SAMSAKTESN (115 aa)) folds into the IRS-type PTB domain. Positions 247-270 (PDLSHEPMRKRSSSANEASKPINV) are disordered. Residues Ser-286, Ser-287, and Ser-342 each carry the phosphoserine modification. Positions 304–345 (RNGTLSESSNQTYFGSNHGLRSNTISGNRPHSTNKHSNSPTF) are enriched in polar residues. The disordered stretch occupies residues 304 to 373 (RNGTLSESSN…SDDNGSYSHY (70 aa)). Tyr-410 carries the phosphotyrosine; by INSR modification. The YXXM motif 1 signature appears at 410-413 (YIPM). Residues 530-556 (RSQSSITKEGSGYGTSGNRQKKSTSAP) are disordered. At Ser-554 the chain carries Phosphoserine. The YXXM motif 2 signature appears at 640 to 643 (YLEM). The segment covering 696 to 706 (REQTTSEEKKS) has biased composition (basic and acidic residues). Positions 696 to 718 (REQTTSEEKKSNSPLNEKPFSLK) are disordered. Position 892 is a phosphotyrosine; by INSR (Tyr-892). Residues 906 to 949 (AKYLKRGSRESPPVSACPEDGNTYAKIDFDQSDSSSSSSNIFNT) are disordered. Ser-913 and Ser-916 each carry phosphoserine. At Tyr-929 the chain carries Phosphotyrosine; by INSR. Residues 937–949 (SDSSSSSSNIFNT) show a composition bias toward low complexity.

In terms of assembly, bindings to phosphatidylinositol 3-kinase and SHP2.

Functionally, activates phosphatidylinositol 3-kinase when bound to the regulatory p85 subunit. May mediate the control of various cellular processes by insulin-like peptides. When phosphorylated by the insulin receptor binds specifically to various cellular proteins containing SH2 domains. Involved in control of cell proliferation, cell size, and body and organ growth throughout development. Also has a role in a signaling pathway controlling the physiological response required to endure periods of low nutrient conditions. Insulin/insulin-like growth factor (IGF) signaling pathway has a role in regulating aging and is necessary in the ovary for vitellogenic maturation. In Drosophila yakuba (Fruit fly), this protein is Insulin receptor substrate 1.